The following is a 441-amino-acid chain: Ribosomal protein uS12 methylthiotransferase RimO (441 aa).

The region spanning 8–118 (PKIGFVSLGC…VLQHVHHYVP (111 aa)) is the MTTase N-terminal domain. [4Fe-4S] cluster-binding residues include Cys17, Cys53, Cys82, Cys150, Cys154, and Cys157. The Radical SAM core domain maps to 136–373 (LTPRHYAYLK…MQLQQQISAE (238 aa)). Residues 376-441 (QEKVGREILV…DEYDLWGSRV (66 aa)) enclose the TRAM domain.

The protein belongs to the methylthiotransferase family. RimO subfamily. [4Fe-4S] cluster is required as a cofactor.

The protein localises to the cytoplasm. The catalysed reaction is L-aspartate(89)-[ribosomal protein uS12]-hydrogen + (sulfur carrier)-SH + AH2 + 2 S-adenosyl-L-methionine = 3-methylsulfanyl-L-aspartate(89)-[ribosomal protein uS12]-hydrogen + (sulfur carrier)-H + 5'-deoxyadenosine + L-methionine + A + S-adenosyl-L-homocysteine + 2 H(+). Catalyzes the methylthiolation of an aspartic acid residue of ribosomal protein uS12. This chain is Ribosomal protein uS12 methylthiotransferase RimO, found in Salmonella paratyphi B (strain ATCC BAA-1250 / SPB7).